The sequence spans 631 residues: Putative meiotic phospholipase SPO1 (631 aa).

A signal peptide spans 1–17 (MQKLLFVFSVLLTVVLA). The required for lipid-binding and function in meiosis stretch occupies residues 24–67 (QCPSSPLIREAKHELCPEETLYLKKKKIKTKNKLIQFLKSLTEA). The PLA2c domain occupies 24–631 (QCPSSPLIRE…LQCFKDYCYS (608 aa)). N-linked (GlcNAc...) asparagine glycans are attached at residues Asn-233, Asn-293, and Asn-303. A helical membrane pass occupies residues 376–396 (FITATSSSIFNNVLIFIWNLA). N-linked (GlcNAc...) asparagine glycans are attached at residues Asn-500, Asn-536, Asn-560, Asn-563, and Asn-572.

This sequence belongs to the lysophospholipase family. Interacts with SPO23. Glycosylated.

The protein localises to the endoplasmic reticulum membrane. Its subcellular location is the nucleus membrane. Its function is as follows. Regulates spindle pole duplication in meiosis I, but not in mitosis. Required for meiosis I, meiosis II chromosome segregation and spore formation. Binds phosphatidylinositol (4)P mono- and polyphosphates. The protein is Putative meiotic phospholipase SPO1 (SPO1) of Saccharomyces cerevisiae (strain ATCC 204508 / S288c) (Baker's yeast).